Consider the following 307-residue polypeptide: MAEITAAAVKELREKSGAGMMDCKKALTETNGDMEAAVDWLRTKGLATAAKKSSRTAAEGLVGVSVEGTKGAAVEVNSETDFVAKNDQFQDFVRTVTQLALTAGDDVAALAGAGYPGGGTVAEKLTSNIATIGENQTLRRAKVVEVSKGTVVPYVHNAAVPGLGKIGVLVALEGDAPVAEMETVGKQIAMHIAAAFPQALTEDGLDPVVIERERAIAAEKAAESGKPAEIVEKMVQGAVAKFRKENALLSQVFVIDNKTPIAQVVANAAKAAGGSITLKDYVRFQLGEGIEKETSDFAAEVAAAVKG.

The segment at 80 to 83 is involved in Mg(2+) ion dislocation from EF-Tu; sequence TDFV.

The protein belongs to the EF-Ts family.

It is found in the cytoplasm. In terms of biological role, associates with the EF-Tu.GDP complex and induces the exchange of GDP to GTP. It remains bound to the aminoacyl-tRNA.EF-Tu.GTP complex up to the GTP hydrolysis stage on the ribosome. The sequence is that of Elongation factor Ts from Rhizorhabdus wittichii (strain DSM 6014 / CCUG 31198 / JCM 15750 / NBRC 105917 / EY 4224 / RW1) (Sphingomonas wittichii).